A 464-amino-acid chain; its full sequence is Fumarate hydratase class II 1 (464 aa).

Substrate contacts are provided by residues 96 to 98, 127 to 130, 137 to 139, and Thr185; these read SGT, HPND, and SSN. His186 serves as the catalytic Proton donor/acceptor. Residue Ser316 is part of the active site. Residues Ser317 and 322 to 324 each bind substrate; that span reads KVN.

This sequence belongs to the class-II fumarase/aspartase family. Fumarase subfamily. In terms of assembly, homotetramer.

It is found in the cytoplasm. It carries out the reaction (S)-malate = fumarate + H2O. Its pathway is carbohydrate metabolism; tricarboxylic acid cycle; (S)-malate from fumarate: step 1/1. Functionally, involved in the TCA cycle. Catalyzes the stereospecific interconversion of fumarate to L-malate. In Pseudomonas aeruginosa (strain ATCC 15692 / DSM 22644 / CIP 104116 / JCM 14847 / LMG 12228 / 1C / PRS 101 / PAO1), this protein is Fumarate hydratase class II 1.